The following is a 206-amino-acid chain: Ribosomal RNA large subunit methyltransferase E (206 aa).

The S-adenosyl-L-methionine site is built by glycine 60, tryptophan 62, aspartate 80, aspartate 96, and aspartate 121. The active-site Proton acceptor is lysine 161.

This sequence belongs to the class I-like SAM-binding methyltransferase superfamily. RNA methyltransferase RlmE family.

It localises to the cytoplasm. It catalyses the reaction uridine(2552) in 23S rRNA + S-adenosyl-L-methionine = 2'-O-methyluridine(2552) in 23S rRNA + S-adenosyl-L-homocysteine + H(+). Its function is as follows. Specifically methylates the uridine in position 2552 of 23S rRNA at the 2'-O position of the ribose in the fully assembled 50S ribosomal subunit. The polypeptide is Ribosomal RNA large subunit methyltransferase E (Francisella tularensis subsp. holarctica (strain FTNF002-00 / FTA)).